A 353-amino-acid chain; its full sequence is Melatonin receptor type 1A (353 aa).

The interval 1–26 (MRANGSELNGTVLPRDPPAEGSPRRP) is disordered. At 1–32 (MRANGSELNGTVLPRDPPAEGSPRRPPWVTST) the chain is on the extracellular side. N-linked (GlcNAc...) asparagine glycans are attached at residues Asn-4 and Asn-9. Residues 33–53 (LATILIFTIVVDLLGNLLVIL) form a helical membrane-spanning segment. Over 54–66 (SVYRNKKLRNAGN) the chain is Cytoplasmic. The helical transmembrane segment at 67–87 (IFVVSLAIADLVVAIYPYPLV) threads the bilayer. Topologically, residues 88–105 (LTSVFHNGWNLGYLHCQI) are extracellular. A disulfide bridge links Cys-103 with Cys-180. The chain crosses the membrane as a helical span at residues 106–126 (SGFLMGLSVIGSIFNITGIAI). Residues 127–145 (NRYCYICHSLKYDKLYSDK) are Cytoplasmic-facing. Residues 146–166 (NSLCYVGLIWVLTVVAIVPNL) traverse the membrane as a helical segment. The Extracellular segment spans residues 167-190 (FVGSLQYDPRIYSCTFAQSVSSAY). Residues 191-211 (TIAVVFFHFILPIAIVTYCYL) form a helical membrane-spanning segment. Residues 212 to 243 (RIWILVIQVRRRVKPDNNPRLKPHDFRNFVTM) are Cytoplasmic-facing. Residues 244 to 264 (FVVFVLFAVCWAPLNFIGLAV) traverse the membrane as a helical segment. Residues 265-277 (AVDPETIIPRIPE) are Extracellular-facing. A helical transmembrane segment spans residues 278–298 (WLFVSSYYMAYFNSCLNAIIY). Topologically, residues 299 to 353 (GLLNQNFRREYKKIVVSFCTAKAFFQDSSNDAADRIRSKPSPLITNNNQVKVDSV) are cytoplasmic.

The protein belongs to the G-protein coupled receptor 1 family. Expressed in optic tectum and retina, less in neostriatum, hypothalamus and thalamus.

It localises to the cell membrane. In terms of biological role, high affinity receptor for melatonin. The activity of this receptor is mediated by pertussis toxin sensitive G proteins that inhibits adenylate cyclase activity. This Gallus gallus (Chicken) protein is Melatonin receptor type 1A.